We begin with the raw amino-acid sequence, 303 residues long: Oxygen-dependent coproporphyrinogen-III oxidase (303 aa).

Ser-93 contacts substrate. His-97 and His-107 together coordinate a divalent metal cation. Residue His-107 is the Proton donor of the active site. 109-111 is a substrate binding site; sequence NVR. A divalent metal cation-binding residues include His-149 and His-179. The interval 244 to 279 is important for dimerization; the sequence is YVEFNLVFDRGTLFGLQSGGRTESILLSMPPLAQWR. Residue 262-264 coordinates substrate; it reads GGR.

The protein belongs to the aerobic coproporphyrinogen-III oxidase family. As to quaternary structure, homodimer. A divalent metal cation serves as cofactor.

The protein localises to the cytoplasm. It carries out the reaction coproporphyrinogen III + O2 + 2 H(+) = protoporphyrinogen IX + 2 CO2 + 2 H2O. The protein operates within porphyrin-containing compound metabolism; protoporphyrin-IX biosynthesis; protoporphyrinogen-IX from coproporphyrinogen-III (O2 route): step 1/1. Functionally, involved in the heme biosynthesis. Catalyzes the aerobic oxidative decarboxylation of propionate groups of rings A and B of coproporphyrinogen-III to yield the vinyl groups in protoporphyrinogen-IX. The protein is Oxygen-dependent coproporphyrinogen-III oxidase of Bordetella parapertussis (strain 12822 / ATCC BAA-587 / NCTC 13253).